The primary structure comprises 377 residues: CaM kinase-like vesicle-associated protein (377 aa).

A Protein kinase domain is found at 24–287; that stretch reads YDLGQLIKTE…AADAISHEWI (264 aa). The tract at residues 324–377 is disordered; sequence MKRLRAPEQTDPGTPSPSKDSDKTPSMATPAPSPANTPAEGAPSLPCPSPDTTG. The segment covering 347–362 has biased composition (low complexity); sequence TPSMATPAPSPANTPA. Residues 368–377 are compositionally biased toward pro residues; it reads LPCPSPDTTG.

Belongs to the protein kinase superfamily. CAMK Ser/Thr protein kinase family. Interacts with calmodulin, in the presence of calcium. The cofactor is Ca(2+).

The protein resides in the cytoplasmic vesicle membrane. In terms of biological role, does not appear to have detectable kinase activity. The protein is CaM kinase-like vesicle-associated protein (camkv) of Xenopus laevis (African clawed frog).